A 492-amino-acid chain; its full sequence is Cytochrome P450 26A1 (492 aa).

Position 437 (Cys437) interacts with heme.

This sequence belongs to the cytochrome P450 family. Heme serves as cofactor.

The protein resides in the endoplasmic reticulum membrane. It is found in the microsome membrane. The enzyme catalyses all-trans-retinoate + reduced [NADPH--hemoprotein reductase] + O2 = all-trans-(4S)-hydroxyretinoate + oxidized [NADPH--hemoprotein reductase] + H2O + H(+). The catalysed reaction is all-trans-(4S)-hydroxyretinoate + reduced [NADPH--hemoprotein reductase] + O2 = all-trans-(4S,16)-dihydroxyretinoate + oxidized [NADPH--hemoprotein reductase] + H2O + H(+). It carries out the reaction all-trans-retinoate + reduced [NADPH--hemoprotein reductase] + O2 = all-trans-18-hydroxyretinoate + oxidized [NADPH--hemoprotein reductase] + H2O + H(+). A cytochrome P450 monooxygenase involved in the metabolism of retinoates (RAs), the active metabolites of vitamin A, and critical signaling molecules in animals. RAs exist as at least four different isomers: all-trans-RA (atRA), 9-cis-RA, 13-cis-RA, and 9,13-dicis-RA, where atRA is considered to be the biologically active isomer, although 9-cis-RA and 13-cis-RA also have activity. Catalyzes the hydroxylation of atRA primarily at C-4 and C-18, thereby contributing to the regulation of atRA homeostasis and signaling. Hydroxylation of atRA limits its biological activity and initiates a degradative process leading to its eventual elimination. Involved in the convertion of atRA to all-trans-4-oxo-RA. Able to metabolize other RAs such as 9-cis, 13-cis and 9,13-di-cis RA. Can oxidize all-trans-13,14-dihydroretinoate (DRA) to metabolites which could include all-trans-4-oxo-DRA, all-trans-4-hydroxy-DRA, all-trans-5,8-epoxy-DRA, and all-trans-18-hydroxy-DRA. May play a role in the oxidative metabolism of xenobiotics such as tazarotenic acid. This chain is Cytochrome P450 26A1 (CYP26A1), found in Gallus gallus (Chicken).